A 41-amino-acid polypeptide reads, in one-letter code: CTTGPCCRQCKLKPAGTTCWKTSRTSHYCTGKSCDCPVYQG.

Disulfide bonds link cysteine 1/cysteine 10, cysteine 6/cysteine 29, cysteine 7/cysteine 34, and cysteine 19/cysteine 36. The Disintegrin domain occupies 1–41 (CTTGPCCRQCKLKPAGTTCWKTSRTSHYCTGKSCDCPVYQG). The Cell attachment site; atypical (KTS) motif lies at 21–23 (KTS).

Monomer. In terms of tissue distribution, expressed by the venom gland.

The protein resides in the secreted. Its function is as follows. Potent and highly selective inhibitor of alpha-1/beta-1 (ITGA1/ITGB1) integrin binding to collagen I and IV. Is about 25-fold more potent than obtustatin inhibiting the binding of this integrin to collagen IV. This Daboia palaestinae (Palestine viper) protein is Disintegrin viperistatin.